A 209-amino-acid chain; its full sequence is Mitochondrial import inner membrane translocase subunit Tim23 (209 aa).

A run of 3 helical transmembrane segments spans residues 73 to 93 (FELAFFTIGGCCMTGAAFGAM), 125 to 145 (ALWANTLGSLALLYSAFGVII), and 181 to 197 (GLAGLTLTSLYALYNNW).

This sequence belongs to the Tim17/Tim22/Tim23 family. In terms of assembly, component of the TIM23 complex at least composed of TIMM23, TIMM17 (TIMM17A or TIMM17B) and TIMM50; within this complex, directly interacts with TIMM50. The complex interacts with the TIMM44 component of the PAM complex and with DNAJC15. Upon mitochondrial depolarization, interacts with PINK1; the interaction is required for PINK1 accumulation at the outer mitochondrial membrane, kinase activation by autophosphorylation and PRKN recruitement to mitochondria.

The protein resides in the mitochondrion inner membrane. Essential component of the TIM23 complex, a complex that mediates the translocation of transit peptide-containing proteins across the mitochondrial inner membrane. Has a role in the activation of stress-induced mitophagy by protecting PINK1 from OMA1-mediated degradation and facilitating its accumulation at the outer mitochondrial membrane in response to depolarization. The sequence is that of Mitochondrial import inner membrane translocase subunit Tim23 (Timm23) from Mus musculus (Mouse).